A 181-amino-acid polypeptide reads, in one-letter code: Large ribosomal subunit protein uL5 (181 aa).

Belongs to the universal ribosomal protein uL5 family. As to quaternary structure, part of the 50S ribosomal subunit; part of the 5S rRNA/L5/L18/L25 subcomplex. Contacts the 5S rRNA and the P site tRNA. Forms a bridge to the 30S subunit in the 70S ribosome.

This is one of the proteins that bind and probably mediate the attachment of the 5S RNA into the large ribosomal subunit, where it forms part of the central protuberance. In the 70S ribosome it contacts protein S13 of the 30S subunit (bridge B1b), connecting the 2 subunits; this bridge is implicated in subunit movement. Contacts the P site tRNA; the 5S rRNA and some of its associated proteins might help stabilize positioning of ribosome-bound tRNAs. This Clostridium kluyveri (strain NBRC 12016) protein is Large ribosomal subunit protein uL5.